The sequence spans 147 residues: Large ribosomal subunit protein bL9 (147 aa).

This sequence belongs to the bacterial ribosomal protein bL9 family.

Its function is as follows. Binds to the 23S rRNA. The polypeptide is Large ribosomal subunit protein bL9 (Bacteroides fragilis (strain ATCC 25285 / DSM 2151 / CCUG 4856 / JCM 11019 / LMG 10263 / NCTC 9343 / Onslow / VPI 2553 / EN-2)).